Here is a 202-residue protein sequence, read N- to C-terminus: MKALTTRQQEVFDLIRDHISQTGMPPTRAEIAQRLGFRSPNAAEEHLKALARKGAIEIVSGASRGIRLLTEEEQGLPLIGRVAAGEPLLAQQHIEGHYQVDPSMFKPNADFLLRVSGMSMKDIGILDGDLLAVHKTQDVRNGQVVVARIDEEVTVKRLKKQGNVVELLPENSEFSPIVVDLRQQSFTIEGLAVGVIRNGEWL.

The segment at residues 28 to 48 (RAEIAQRLGFRSPNAAEEHLK) is a DNA-binding region (H-T-H motif). Active-site for autocatalytic cleavage activity residues include Ser119 and Lys156.

Belongs to the peptidase S24 family. Homodimer.

It catalyses the reaction Hydrolysis of Ala-|-Gly bond in repressor LexA.. Functionally, represses a number of genes involved in the response to DNA damage (SOS response), including recA and lexA. Binds to the 16 bp palindromic sequence 5'-CTGTATATATATACAG-3'. In the presence of single-stranded DNA, RecA interacts with LexA causing an autocatalytic cleavage which disrupts the DNA-binding part of LexA, leading to derepression of the SOS regulon and eventually DNA repair. The polypeptide is LexA repressor (Klebsiella pneumoniae subsp. pneumoniae (strain ATCC 700721 / MGH 78578)).